The primary structure comprises 750 residues: Catalase-peroxidase 1 (750 aa).

The tryptophyl-tyrosyl-methioninium (Trp-Tyr) (with M-264) cross-link spans 90–238 (WHSAGTYRVM…VSAAHMGLIY (149 aa)). The active-site Proton acceptor is His91. The interval 199 to 218 (NEGHKESGVIDGSESKKGHK) is disordered. A compositionally biased stretch (basic and acidic residues) spans 200-218 (EGHKESGVIDGSESKKGHK). A cross-link (tryptophyl-tyrosyl-methioninium (Tyr-Met) (with W-90)) is located at residues 238–264 (YVNPEGPDGIPDPVAAARDIRTTFSRM). Residue His279 coordinates heme b.

This sequence belongs to the peroxidase family. Peroxidase/catalase subfamily. Homodimer or homotetramer. Predominantly homodimeric. Requires heme b as cofactor. In terms of processing, formation of the three residue Trp-Tyr-Met cross-link is important for the catalase, but not the peroxidase activity of the enzyme.

It is found in the cytoplasm. The catalysed reaction is H2O2 + AH2 = A + 2 H2O. The enzyme catalyses 2 H2O2 = O2 + 2 H2O. Bifunctional enzyme with both catalase and broad-spectrum peroxidase activity. This Pyricularia oryzae (strain 70-15 / ATCC MYA-4617 / FGSC 8958) (Rice blast fungus) protein is Catalase-peroxidase 1.